The primary structure comprises 144 residues: Large ribosomal subunit protein uL24 (144 aa).

The segment at 1 to 22 is disordered; it reads MKFNKMVSSDRGKNRKRHFNAP. Positions 13-22 are enriched in basic residues; that stretch reads KNRKRHFNAP.

Belongs to the universal ribosomal protein uL24 family.

In Littorina littorea (Common periwinkle), this protein is Large ribosomal subunit protein uL24 (RPL26).